The primary structure comprises 143 residues: Large ribosomal subunit protein uL15 (143 aa).

The disordered stretch occupies residues 1–54; sequence MELNSIKPAEGAKHAKRRVGRGIGSGLGKTAGRGHKGQKSRSGGYHKVGFEGGQ. Over residues 21 to 31 the composition is skewed to gly residues; the sequence is RGIGSGLGKTA.

This sequence belongs to the universal ribosomal protein uL15 family. As to quaternary structure, part of the 50S ribosomal subunit.

Functionally, binds to the 23S rRNA. The sequence is that of Large ribosomal subunit protein uL15 from Paracidovorax citrulli (strain AAC00-1) (Acidovorax citrulli).